We begin with the raw amino-acid sequence, 244 residues long: tRNA pseudouridine synthase B (244 aa).

D46 acts as the Nucleophile in catalysis.

This sequence belongs to the pseudouridine synthase TruB family. Type 1 subfamily.

The enzyme catalyses uridine(55) in tRNA = pseudouridine(55) in tRNA. Functionally, responsible for synthesis of pseudouridine from uracil-55 in the psi GC loop of transfer RNAs. The sequence is that of tRNA pseudouridine synthase B from Bordetella bronchiseptica (strain ATCC BAA-588 / NCTC 13252 / RB50) (Alcaligenes bronchisepticus).